The sequence spans 326 residues: Vacuolar protein sorting-associated protein 26A-A (326 aa).

The tract at residues Thr-306–Ile-326 is disordered. The span at Gln-315 to Ile-326 shows a compositional bias: low complexity.

Belongs to the VPS26 family. As to quaternary structure, component of the heterotrimeric retromer cargo-selective complex (CSC) which is believed to associate with variable sorting nexins to form functionally distinct retromer complex variants.

It is found in the cytoplasm. The protein resides in the endosome membrane. It localises to the early endosome. Functionally, acts as a component of the retromer cargo-selective complex (CSC). The CSC is believed to be the core functional component of retromer or respective retromer complex variants acting to prevent missorting of selected transmembrane cargo proteins into the lysosomal degradation pathway. Retromer mediates retrograde transport of cargo proteins from endosomes to the trans-Golgi network (TGN). This Xenopus laevis (African clawed frog) protein is Vacuolar protein sorting-associated protein 26A-A (vps26a-a).